The primary structure comprises 1036 residues: Isoleucine--tRNA ligase (1036 aa).

The 'HIGH' region signature appears at 46–56 (PFATGLPHYGH). A 'KMSKS' region motif is present at residues 589–593 (KMSKR). Lysine 592 contributes to the ATP binding site.

The protein belongs to the class-I aminoacyl-tRNA synthetase family. IleS type 2 subfamily. As to quaternary structure, monomer. Requires Zn(2+) as cofactor.

The protein localises to the cytoplasm. It carries out the reaction tRNA(Ile) + L-isoleucine + ATP = L-isoleucyl-tRNA(Ile) + AMP + diphosphate. Its function is as follows. Catalyzes the attachment of isoleucine to tRNA(Ile). As IleRS can inadvertently accommodate and process structurally similar amino acids such as valine, to avoid such errors it has two additional distinct tRNA(Ile)-dependent editing activities. One activity is designated as 'pretransfer' editing and involves the hydrolysis of activated Val-AMP. The other activity is designated 'posttransfer' editing and involves deacylation of mischarged Val-tRNA(Ile). In Chlamydia trachomatis serovar A (strain ATCC VR-571B / DSM 19440 / HAR-13), this protein is Isoleucine--tRNA ligase.